The chain runs to 912 residues: Metabotropic glutamate receptor 4 (912 aa).

Residues 1–32 (MPGKSGLGWWWARLPLCLLLSLYGPWMPSSLG) form the signal peptide. Over 33–586 (KPKGHPHMNS…PIIKLEWDSP (554 aa)) the chain is Extracellular. Cys-67 and Cys-109 form a disulfide bridge. Asn-98 is a glycosylation site (N-linked (GlcNAc...) asparagine). L-glutamate is bound by residues Ser-159, 180-182 (AST), and Tyr-230. 7 cysteine pairs are disulfide-bonded: Cys-249/Cys-538, Cys-372/Cys-388, Cys-428/Cys-435, Cys-520/Cys-539, Cys-524/Cys-542, Cys-545/Cys-557, and Cys-560/Cys-573. An N-linked (GlcNAc...) asparagine glycan is attached at Asn-301. Asp-312 serves as a coordination point for L-glutamate. Lys-405 is an L-glutamate binding site. 2 N-linked (GlcNAc...) asparagine glycosylation sites follow: Asn-454 and Asn-484. Asn-569 carries an N-linked (GlcNAc...) asparagine glycan. Residues 587–607 (WAVLPLFLAVVGIAATLFVVI) form a helical membrane-spanning segment. The Cytoplasmic portion of the chain corresponds to 608–624 (TFVRYNDTPIVKASGRE). The chain crosses the membrane as a helical span at residues 625–645 (LSYVLLAGIFLCYATTFLMIA). Residues 646-653 (EPDLGTCS) lie on the Extracellular side of the membrane. A helical membrane pass occupies residues 654 to 671 (LRRIFLGLGMSISYAALL). At 672–699 (TKTNRIYRIFEQGKRSVSAPRFISPASQ) the chain is on the cytoplasmic side. Residues 700 to 720 (LAITFSLISLQLLGICVWFVV) traverse the membrane as a helical segment. Residues 721-751 (DPSHSVVDFQDQRTLDPRFARGVLKCDISDL) are Extracellular-facing. The helical transmembrane segment at 752–772 (SLICLLGYSMLLMVTCTVYAI) threads the bilayer. Residues 773–786 (KTRGVPETFNEAKP) lie on the Cytoplasmic side of the membrane. The helical transmembrane segment at 787 to 807 (IGFTMYTTCIVWLAFIPIFFG) threads the bilayer. The Extracellular portion of the chain corresponds to 808–826 (TSQSADKLYIQTTTLTVSV). A helical transmembrane segment spans residues 827-847 (SLSASVSLGMLYMPKVYIILF). Over 848 to 912 (HPEQNVPKRK…TYVTYTNHAI (65 aa)) the chain is Cytoplasmic.

Belongs to the G-protein coupled receptor 3 family. As to quaternary structure, interacts with PICK1.

The protein localises to the cell membrane. In terms of biological role, G-protein coupled receptor for glutamate. Ligand binding causes a conformation change that triggers signaling via guanine nucleotide-binding proteins (G proteins) and modulates the activity of down-stream effectors. Signaling inhibits adenylate cyclase activity. This chain is Metabotropic glutamate receptor 4 (GRM4), found in Macaca fascicularis (Crab-eating macaque).